Reading from the N-terminus, the 181-residue chain is Adenine phosphoribosyltransferase (181 aa).

This sequence belongs to the purine/pyrimidine phosphoribosyltransferase family. In terms of assembly, homodimer.

It is found in the cytoplasm. The catalysed reaction is AMP + diphosphate = 5-phospho-alpha-D-ribose 1-diphosphate + adenine. It participates in purine metabolism; AMP biosynthesis via salvage pathway; AMP from adenine: step 1/1. Its function is as follows. Catalyzes a salvage reaction resulting in the formation of AMP, that is energically less costly than de novo synthesis. This is Adenine phosphoribosyltransferase from Shewanella amazonensis (strain ATCC BAA-1098 / SB2B).